The primary structure comprises 83 residues: Large ribosomal subunit protein bL31B (83 aa).

It belongs to the bacterial ribosomal protein bL31 family. Type B subfamily. As to quaternary structure, part of the 50S ribosomal subunit.

The sequence is that of Large ribosomal subunit protein bL31B from Leifsonia xyli subsp. xyli (strain CTCB07).